We begin with the raw amino-acid sequence, 1019 residues long: Phosphatidylinositol 3,4,5-trisphosphate 5-phosphatase 1 (1019 aa).

Residues 5 to 101 form the SH2 domain; sequence WYHGNITRSK…GLVTHLQYPI (97 aa). Acidic residues predominate over residues 103–116; the sequence is KEEEGPEEPDEEQE. Disordered stretches follow at residues 103-133 and 909-1019; these read KEEE…TPPS and ETQN…PPTA. The SH3-binding 1 signature appears at 120-125; the sequence is PNVPPR. 2 stretches are compositionally biased toward polar residues: residues 909–931 and 958–980; these read ETQN…KQSP and PITS…TNRT. Positions 966–971 match the SH3-binding 2 motif; it reads TLSTQK. The short motif at 1004–1007 is the NPXY motif element; it reads NPLY. Y1007 carries the post-translational modification Phosphotyrosine. Residues 1010–1019 are compositionally biased toward polar residues; it reads VNNTLYPPTA.

Belongs to the inositol 1,4,5-trisphosphate 5-phosphatase family. Post-translationally, tyrosine phosphorylated by the members of the SRC family after exposure to a diverse array of extracellular stimuli.

The protein resides in the cytoplasm. It localises to the cell membrane. Its subcellular location is the membrane raft. The protein localises to the cytoskeleton. The enzyme catalyses a 1,2-diacyl-sn-glycero-3-phospho-(1D-myo-inositol-3,4,5-trisphosphate) + H2O = a 1,2-diacyl-sn-glycero-3-phospho-(1D-myo-inositol-3,4-bisphosphate) + phosphate. It catalyses the reaction 1D-myo-inositol 1,3,4,5-tetrakisphosphate + H2O = 1D-myo-inositol 1,3,4-trisphosphate + phosphate. The catalysed reaction is a 1,2-diacyl-sn-glycero-3-phospho-(1D-myo-inositol-4,5-bisphosphate) + H2O = a 1,2-diacyl-sn-glycero-3-phospho-(1D-myo-inositol 4-phosphate) + phosphate. Phosphatidylinositol (PtdIns) phosphatase that specifically hydrolyzes the 5-phosphate of phosphatidylinositol-3,4,5-trisphosphate (PtdIns(3,4,5)P3) to produce PtdIns(3,4)P2, thereby negatively regulating the PI3K (phosphoinositide 3-kinase) pathways. Able also to hydrolyzes the 5-phosphate of phosphatidylinositol-4,5-bisphosphate (PtdIns(4,5)P3) and inositol 1,3,4,5-tetrakisphosphate. Acts as a negative regulator of B-cell antigen receptor signaling. Mediates signaling from the FC-gamma-RIIB receptor (FCGR2B), playing a central role in terminating signal transduction from activating immune/hematopoietic cell receptor systems. Acts as a negative regulator of myeloid cell proliferation/survival and chemotaxis, mast cell degranulation, immune cells homeostasis, integrin alpha-IIb/beta-3 signaling in platelets and JNK signaling in B-cells. The sequence is that of Phosphatidylinositol 3,4,5-trisphosphate 5-phosphatase 1 (inpp5d) from Xenopus laevis (African clawed frog).